The primary structure comprises 263 residues: Endonuclease 8 (263 aa).

The Schiff-base intermediate with DNA role is filled by proline 2. The active-site Proton donor is the glutamate 3. The active-site Proton donor; for beta-elimination activity is the lysine 53. DNA is bound by residues glutamine 70, arginine 125, and asparagine 169. An FPG-type zinc finger spans residues 229-263 (KVFHRDGEACERCGGIIEKTTLSSRPFYWCPHCQK). Arginine 253 functions as the Proton donor; for delta-elimination activity in the catalytic mechanism.

The protein belongs to the FPG family. Requires Zn(2+) as cofactor.

The catalysed reaction is 2'-deoxyribonucleotide-(2'-deoxyribose 5'-phosphate)-2'-deoxyribonucleotide-DNA = a 3'-end 2'-deoxyribonucleotide-(2,3-dehydro-2,3-deoxyribose 5'-phosphate)-DNA + a 5'-end 5'-phospho-2'-deoxyribonucleoside-DNA + H(+). In terms of biological role, involved in base excision repair of DNA damaged by oxidation or by mutagenic agents. Acts as a DNA glycosylase that recognizes and removes damaged bases. Has a preference for oxidized pyrimidines, such as thymine glycol, 5,6-dihydrouracil and 5,6-dihydrothymine. Has AP (apurinic/apyrimidinic) lyase activity and introduces nicks in the DNA strand. Cleaves the DNA backbone by beta-delta elimination to generate a single-strand break at the site of the removed base with both 3'- and 5'-phosphates. In Salmonella enteritidis PT4 (strain P125109), this protein is Endonuclease 8.